Here is a 163-residue protein sequence, read N- to C-terminus: Large ribosomal subunit protein bL17 (163 aa).

The segment covering 123-135 (AEASRATRASASK) has biased composition (low complexity). Positions 123–163 (AEASRATRASASKKAAEEAETEEVVEAPAEETATEEAAEEK) are disordered. Positions 140–163 (EAETEEVVEAPAEETATEEAAEEK) are enriched in acidic residues.

It belongs to the bacterial ribosomal protein bL17 family. In terms of assembly, part of the 50S ribosomal subunit. Contacts protein L32.

The protein is Large ribosomal subunit protein bL17 of Corynebacterium glutamicum (strain ATCC 13032 / DSM 20300 / JCM 1318 / BCRC 11384 / CCUG 27702 / LMG 3730 / NBRC 12168 / NCIMB 10025 / NRRL B-2784 / 534).